The sequence spans 135 residues: Hydroxylaminobenzene mutase HabA (135 aa).

Transmembrane regions (helical) follow at residues L5 to V25, V33 to Y55, F67 to W87, and F113 to I133.

It localises to the cell membrane. It catalyses the reaction N-phenylhydroxylamine = 2-aminophenol. Its function is as follows. Catalyzes the rearrangement of hydroxylaminobenzene to 2-aminophenol. Involved in the degradation of nitrobenzene. This chain is Hydroxylaminobenzene mutase HabA (habA), found in Ectopseudomonas oleovorans (Pseudomonas oleovorans).